Consider the following 427-residue polypeptide: Tol-Pal system protein TolB (427 aa).

The signal sequence occupies residues Met1 to Ala23.

The protein belongs to the TolB family. In terms of assembly, the Tol-Pal system is composed of five core proteins: the inner membrane proteins TolA, TolQ and TolR, the periplasmic protein TolB and the outer membrane protein Pal. They form a network linking the inner and outer membranes and the peptidoglycan layer.

It localises to the periplasm. Functionally, part of the Tol-Pal system, which plays a role in outer membrane invagination during cell division and is important for maintaining outer membrane integrity. The chain is Tol-Pal system protein TolB from Haemophilus influenzae (strain PittGG).